The following is a 349-amino-acid chain: Nicotinate-nucleotide--dimethylbenzimidazole phosphoribosyltransferase (349 aa).

Catalysis depends on glutamate 318, which acts as the Proton acceptor.

It belongs to the CobT family.

It carries out the reaction 5,6-dimethylbenzimidazole + nicotinate beta-D-ribonucleotide = alpha-ribazole 5'-phosphate + nicotinate + H(+). The protein operates within nucleoside biosynthesis; alpha-ribazole biosynthesis; alpha-ribazole from 5,6-dimethylbenzimidazole: step 1/2. Its function is as follows. Catalyzes the synthesis of alpha-ribazole-5'-phosphate from nicotinate mononucleotide (NAMN) and 5,6-dimethylbenzimidazole (DMB). The polypeptide is Nicotinate-nucleotide--dimethylbenzimidazole phosphoribosyltransferase (Geobacter sp. (strain M21)).